Reading from the N-terminus, the 140-residue chain is Probable disulfide formation protein C 2 (140 aa).

Residues 6–25 traverse the membrane as a helical segment; that stretch reads KYHIAIAWTIATSAMLISLI. The cysteines at positions 35 and 38 are disulfide-linked. A run of 2 helical transmembrane segments spans residues 40-59 and 66-83; these read YQRM…MYRK and YAFP…YQIT. Cysteines 95 and 101 form a disulfide. Residues 110 to 134 traverse the membrane as a helical segment; it reads GFISIPMLSFVGFLAIIILLYINQI.

It belongs to the DsbB family. BdbC subfamily.

It localises to the cell membrane. Its function is as follows. Required for disulfide bond formation in some proteins. This Bacillus anthracis protein is Probable disulfide formation protein C 2 (bdbC2).